A 254-amino-acid polypeptide reads, in one-letter code: Triosephosphate isomerase (254 aa).

Residue 9–11 (NWK) participates in substrate binding. Histidine 98 functions as the Electrophile in the catalytic mechanism. Glutamate 170 functions as the Proton acceptor in the catalytic mechanism. Residues glycine 176, serine 215, and 236 to 237 (GG) each bind substrate.

This sequence belongs to the triosephosphate isomerase family. Homodimer.

It localises to the cytoplasm. The catalysed reaction is D-glyceraldehyde 3-phosphate = dihydroxyacetone phosphate. Its pathway is carbohydrate biosynthesis; gluconeogenesis. It functions in the pathway carbohydrate degradation; glycolysis; D-glyceraldehyde 3-phosphate from glycerone phosphate: step 1/1. Involved in the gluconeogenesis. Catalyzes stereospecifically the conversion of dihydroxyacetone phosphate (DHAP) to D-glyceraldehyde-3-phosphate (G3P). In Buchnera aphidicola subsp. Cinara cedri (strain Cc), this protein is Triosephosphate isomerase.